The chain runs to 96 residues: Large ribosomal subunit protein uL23 (96 aa).

Belongs to the universal ribosomal protein uL23 family. Part of the 50S ribosomal subunit. Contacts protein L29, and trigger factor when it is bound to the ribosome.

Functionally, one of the early assembly proteins it binds 23S rRNA. One of the proteins that surrounds the polypeptide exit tunnel on the outside of the ribosome. Forms the main docking site for trigger factor binding to the ribosome. This chain is Large ribosomal subunit protein uL23, found in Caldicellulosiruptor saccharolyticus (strain ATCC 43494 / DSM 8903 / Tp8T 6331).